Consider the following 251-residue polypeptide: CDP-diacylglycerol pyrophosphatase (251 aa).

The helical transmembrane segment at 4 to 24 (AGLLFLVMIVIAVVAAGIGYW) threads the bilayer.

It belongs to the Cdh family.

It is found in the cell inner membrane. It carries out the reaction a CDP-1,2-diacyl-sn-glycerol + H2O = a 1,2-diacyl-sn-glycero-3-phosphate + CMP + 2 H(+). It participates in phospholipid metabolism; CDP-diacylglycerol degradation; phosphatidate from CDP-diacylglycerol: step 1/1. The polypeptide is CDP-diacylglycerol pyrophosphatase (Escherichia coli O81 (strain ED1a)).